We begin with the raw amino-acid sequence, 247 residues long: 5'-nucleotidase SurE (247 aa).

A divalent metal cation contacts are provided by Asp8, Asp9, Ser39, and Asn91.

Belongs to the SurE nucleotidase family. The cofactor is a divalent metal cation.

The protein localises to the cytoplasm. The catalysed reaction is a ribonucleoside 5'-phosphate + H2O = a ribonucleoside + phosphate. Nucleotidase that shows phosphatase activity on nucleoside 5'-monophosphates. The chain is 5'-nucleotidase SurE from Leptospira biflexa serovar Patoc (strain Patoc 1 / Ames).